We begin with the raw amino-acid sequence, 476 residues long: Aspartyl/glutamyl-tRNA(Asn/Gln) amidotransferase subunit B (476 aa).

It belongs to the GatB/GatE family. GatB subfamily. In terms of assembly, heterotrimer of A, B and C subunits.

The catalysed reaction is L-glutamyl-tRNA(Gln) + L-glutamine + ATP + H2O = L-glutaminyl-tRNA(Gln) + L-glutamate + ADP + phosphate + H(+). It carries out the reaction L-aspartyl-tRNA(Asn) + L-glutamine + ATP + H2O = L-asparaginyl-tRNA(Asn) + L-glutamate + ADP + phosphate + 2 H(+). Functionally, allows the formation of correctly charged Asn-tRNA(Asn) or Gln-tRNA(Gln) through the transamidation of misacylated Asp-tRNA(Asn) or Glu-tRNA(Gln) in organisms which lack either or both of asparaginyl-tRNA or glutaminyl-tRNA synthetases. The reaction takes place in the presence of glutamine and ATP through an activated phospho-Asp-tRNA(Asn) or phospho-Glu-tRNA(Gln). The sequence is that of Aspartyl/glutamyl-tRNA(Asn/Gln) amidotransferase subunit B from Bacillus licheniformis (strain ATCC 14580 / DSM 13 / JCM 2505 / CCUG 7422 / NBRC 12200 / NCIMB 9375 / NCTC 10341 / NRRL NRS-1264 / Gibson 46).